The sequence spans 588 residues: Acid beta-fructofuranosidase 1, vacuolar (588 aa).

Residues 1–31 are Cytoplasmic-facing; that stretch reads MDTSTSAYAPLPGEDPLFSGHPPASLRRSWK. Positions 1 to 115 are cleaved as a propeptide — removed in mature form; sequence MDTSTSAYAP…LSYNWTNAMF (115 aa). The chain crosses the membrane as a helical; Signal-anchor for type II membrane protein span at residues 32-52; sequence GFAVIFASVLFLLSLVGLIIH. The Lumenal portion of the chain corresponds to 53 to 588; the sequence is QGPQQPPDVM…LRALRKEVGR (536 aa). The segment at 57 to 86 is disordered; that stretch reads QPPDVMPDKQDEHHHPQSTTPASETTASWE. Basic and acidic residues predominate over residues 62–71; that stretch reads MPDKQDEHHH. Polar residues predominate over residues 73–84; it reads QSTTPASETTAS. Residues 130–133, Q149, and W157 contribute to the substrate site; that span reads WMND. Residue D133 is part of the active site. A glycan (N-linked (GlcNAc...) asparagine) is linked at N159. 192–193 lines the substrate pocket; that stretch reads WS. N-linked (GlcNAc...) asparagine glycosylation occurs at N226. Substrate is bound by residues 256-257, E311, and D344; that span reads RD. Cysteines 499 and 545 form a disulfide.

It belongs to the glycosyl hydrolase 32 family. In terms of assembly, monomer. May be present in two forms, a 70 kDa monomer and a heterodimer of the 30 kDa and 38 kDa subunits. The ratio of the levels of the two forms within cells appears to be regulated developmentally. Post-translationally, glycosylated. In terms of tissue distribution, expressed in buds, stems, roots and leaves. Expressed in the epidermal cells of young leaves and of primordial leaves.

It is found in the membrane. It localises to the vacuole lumen. The catalysed reaction is Hydrolysis of terminal non-reducing beta-D-fructofuranoside residues in beta-D-fructofuranosides.. Functionally, acidic vacuolar invertase involved in light-induced bud burst. In Rosa hybrid cultivar, this protein is Acid beta-fructofuranosidase 1, vacuolar.